Consider the following 101-residue polypeptide: ATP synthase subunit c (101 aa).

Helical transmembrane passes span 35–55 and 81–101; these read IGAG…GLIG and GISE…IFVV.

It belongs to the ATPase C chain family. F-type ATPases have 2 components, F(1) - the catalytic core - and F(0) - the membrane proton channel. F(1) has five subunits: alpha(3), beta(3), gamma(1), delta(1), epsilon(1). F(0) has three main subunits: a(1), b(2) and c(10-14). The alpha and beta chains form an alternating ring which encloses part of the gamma chain. F(1) is attached to F(0) by a central stalk formed by the gamma and epsilon chains, while a peripheral stalk is formed by the delta and b chains.

It is found in the cell membrane. In terms of biological role, f(1)F(0) ATP synthase produces ATP from ADP in the presence of a proton or sodium gradient. F-type ATPases consist of two structural domains, F(1) containing the extramembraneous catalytic core and F(0) containing the membrane proton channel, linked together by a central stalk and a peripheral stalk. During catalysis, ATP synthesis in the catalytic domain of F(1) is coupled via a rotary mechanism of the central stalk subunits to proton translocation. Key component of the F(0) channel; it plays a direct role in translocation across the membrane. A homomeric c-ring of between 10-14 subunits forms the central stalk rotor element with the F(1) delta and epsilon subunits. This chain is ATP synthase subunit c, found in Mycoplasma capricolum subsp. capricolum (strain California kid / ATCC 27343 / NCTC 10154).